The sequence spans 122 residues: Large ribosomal subunit protein uL18 (122 aa).

It belongs to the universal ribosomal protein uL18 family. As to quaternary structure, part of the 50S ribosomal subunit; part of the 5S rRNA/L5/L18/L25 subcomplex. Contacts the 5S and 23S rRNAs.

Functionally, this is one of the proteins that bind and probably mediate the attachment of the 5S RNA into the large ribosomal subunit, where it forms part of the central protuberance. The sequence is that of Large ribosomal subunit protein uL18 from Thermotoga neapolitana (strain ATCC 49049 / DSM 4359 / NBRC 107923 / NS-E).